A 228-amino-acid chain; its full sequence is Protein GrpE (228 aa).

2 disordered regions span residues 1 to 31 (MADEKNKSQNPDLEQRDINNPRDREALNRAA) and 209 to 228 (GVSKGGPKATADNGASEGNG).

It belongs to the GrpE family. In terms of assembly, homodimer.

Its subcellular location is the cytoplasm. Functionally, participates actively in the response to hyperosmotic and heat shock by preventing the aggregation of stress-denatured proteins, in association with DnaK and GrpE. It is the nucleotide exchange factor for DnaK and may function as a thermosensor. Unfolded proteins bind initially to DnaJ; upon interaction with the DnaJ-bound protein, DnaK hydrolyzes its bound ATP, resulting in the formation of a stable complex. GrpE releases ADP from DnaK; ATP binding to DnaK triggers the release of the substrate protein, thus completing the reaction cycle. Several rounds of ATP-dependent interactions between DnaJ, DnaK and GrpE are required for fully efficient folding. This is Protein GrpE from Brucella anthropi (strain ATCC 49188 / DSM 6882 / CCUG 24695 / JCM 21032 / LMG 3331 / NBRC 15819 / NCTC 12168 / Alc 37) (Ochrobactrum anthropi).